A 380-amino-acid chain; its full sequence is 3-isopropylmalate dehydratase large subunit 2 (380 aa).

Residues C262, C320, and C323 each coordinate [4Fe-4S] cluster.

Belongs to the aconitase/IPM isomerase family. LeuC type 2 subfamily. Heterodimer of LeuC and LeuD. The cofactor is [4Fe-4S] cluster.

The catalysed reaction is (2R,3S)-3-isopropylmalate = (2S)-2-isopropylmalate. It participates in amino-acid biosynthesis; L-leucine biosynthesis; L-leucine from 3-methyl-2-oxobutanoate: step 2/4. Its function is as follows. Catalyzes the isomerization between 2-isopropylmalate and 3-isopropylmalate, via the formation of 2-isopropylmaleate. The sequence is that of 3-isopropylmalate dehydratase large subunit 2 from Pyrococcus furiosus (strain ATCC 43587 / DSM 3638 / JCM 8422 / Vc1).